The sequence spans 230 residues: Ribose-5-phosphate isomerase A (230 aa).

Substrate contacts are provided by residues 32-35, 85-88, and 98-101; these read TGST, DGAD, and KGGG. The active-site Proton acceptor is the Glu107. Residue Lys125 coordinates substrate.

Belongs to the ribose 5-phosphate isomerase family. As to quaternary structure, homodimer.

The catalysed reaction is aldehydo-D-ribose 5-phosphate = D-ribulose 5-phosphate. The protein operates within carbohydrate degradation; pentose phosphate pathway; D-ribose 5-phosphate from D-ribulose 5-phosphate (non-oxidative stage): step 1/1. Functionally, catalyzes the reversible conversion of ribose-5-phosphate to ribulose 5-phosphate. This is Ribose-5-phosphate isomerase A from Burkholderia ambifaria (strain MC40-6).